Here is a 371-residue protein sequence, read N- to C-terminus: Cytochrome b (371 aa).

4 helical membrane passes run 25-45 (FGSM…FLAV), 69-90 (WMMQ…YIHI), 105-125 (WMSG…GYVL), and 170-190 (FFAL…LHII). H75 and H89 together coordinate heme b. Positions 174 and 188 each coordinate heme b. Residue H193 coordinates a ubiquinone. Helical transmembrane passes span 218 to 238 (YKDL…VSFF), 280 to 300 (LGGA…PFMH), 312 to 332 (LSQL…WAAT), and 339 to 358 (YIMI…LSIP).

This sequence belongs to the cytochrome b family. As to quaternary structure, the cytochrome bc1 complex contains 3 respiratory subunits (MT-CYB, CYC1 and UQCRFS1), 2 core proteins (UQCRC1 and UQCRC2) and probably 6 low-molecular weight proteins. Heme b is required as a cofactor.

The protein resides in the mitochondrion inner membrane. Functionally, component of the ubiquinol-cytochrome c reductase complex (complex III or cytochrome b-c1 complex) that is part of the mitochondrial respiratory chain. The b-c1 complex mediates electron transfer from ubiquinol to cytochrome c. Contributes to the generation of a proton gradient across the mitochondrial membrane that is then used for ATP synthesis. The protein is Cytochrome b (MT-CYB) of Simalia amethistina (Amethystine python).